The following is a 73-amino-acid chain: Translation initiation factor IF-1 (73 aa).

The 73-residue stretch at 1–73 (MANKEELIEF…TKGRITYRAR (73 aa)) folds into the S1-like domain.

It belongs to the IF-1 family. As to quaternary structure, component of the 30S ribosomal translation pre-initiation complex which assembles on the 30S ribosome in the order IF-2 and IF-3, IF-1 and N-formylmethionyl-tRNA(fMet); mRNA recruitment can occur at any time during PIC assembly.

The protein resides in the cytoplasm. Functionally, one of the essential components for the initiation of protein synthesis. Stabilizes the binding of IF-2 and IF-3 on the 30S subunit to which N-formylmethionyl-tRNA(fMet) subsequently binds. Helps modulate mRNA selection, yielding the 30S pre-initiation complex (PIC). Upon addition of the 50S ribosomal subunit IF-1, IF-2 and IF-3 are released leaving the mature 70S translation initiation complex. This Acinetobacter baumannii (strain ATCC 17978 / DSM 105126 / CIP 53.77 / LMG 1025 / NCDC KC755 / 5377) protein is Translation initiation factor IF-1.